The chain runs to 357 residues: uncharacterized protein (357 aa).

The Radical SAM core domain occupies 27 to 242; that stretch reads HFGNTVTFER…VSSVRLNFPK (216 aa). [4Fe-4S] cluster is bound by residues cysteine 44, cysteine 50, and cysteine 53.

[4Fe-4S] cluster is required as a cofactor.

This is an uncharacterized protein from Methanocaldococcus jannaschii (strain ATCC 43067 / DSM 2661 / JAL-1 / JCM 10045 / NBRC 100440) (Methanococcus jannaschii).